Reading from the N-terminus, the 209-residue chain is ATP-dependent Clp protease proteolytic subunit 2 (209 aa).

The active-site Nucleophile is the serine 107. Histidine 132 is an active-site residue.

It belongs to the peptidase S14 family. Fourteen ClpP subunits assemble into 2 heptameric rings which stack back to back to give a disk-like structure with a central cavity, resembling the structure of eukaryotic proteasomes.

It localises to the cytoplasm. The catalysed reaction is Hydrolysis of proteins to small peptides in the presence of ATP and magnesium. alpha-casein is the usual test substrate. In the absence of ATP, only oligopeptides shorter than five residues are hydrolyzed (such as succinyl-Leu-Tyr-|-NHMec, and Leu-Tyr-Leu-|-Tyr-Trp, in which cleavage of the -Tyr-|-Leu- and -Tyr-|-Trp bonds also occurs).. In terms of biological role, cleaves peptides in various proteins in a process that requires ATP hydrolysis. Has a chymotrypsin-like activity. Plays a major role in the degradation of misfolded proteins. The protein is ATP-dependent Clp protease proteolytic subunit 2 of Corynebacterium jeikeium (strain K411).